A 360-amino-acid polypeptide reads, in one-letter code: MLVWLAEYLVQYNTAFNVVSYITFRSIMALLTALIIGLWIGSTVIRRLQILKFGQEVRHDGPESHYKKRGTPTMGGIMILFAIGVSTLLWADLRNPYVWFVLFILFGYGVVGFVDDYWKIARKNTDGLIARWKYFWLSVIALVSAFGMYAIGKDTAATQLVVPFFKDVMPQLGLFYIVLTYFVIVGTSNAVNLTDGLDGLAIVPLIMVAGAFALIAWATGNYNFAQYLHIPYIKYSGELVILCTAIVGAGLGFLWFNTYPAQVFMGDVGSLSLGGALGVIAVLVRQELLLVVMGGVFVVEALSVILQVGSYKLRQKRIFRMAPIHHHFELKGWPEPRVIVRFWIITLMLVLIGLVTLKLR.

10 helical membrane-spanning segments follow: residues Tyr21–Gly41, Thr73–Leu93, Val98–Trp118, Trp132–Gly152, Val168–Ser188, Gly199–Thr219, Ser236–Phe256, Val263–Leu283, Leu288–Val308, and Val338–Lys358.

The protein belongs to the glycosyltransferase 4 family. MraY subfamily. The cofactor is Mg(2+).

The protein localises to the cell inner membrane. The enzyme catalyses UDP-N-acetyl-alpha-D-muramoyl-L-alanyl-gamma-D-glutamyl-meso-2,6-diaminopimeloyl-D-alanyl-D-alanine + di-trans,octa-cis-undecaprenyl phosphate = di-trans,octa-cis-undecaprenyl diphospho-N-acetyl-alpha-D-muramoyl-L-alanyl-D-glutamyl-meso-2,6-diaminopimeloyl-D-alanyl-D-alanine + UMP. It participates in cell wall biogenesis; peptidoglycan biosynthesis. Functionally, catalyzes the initial step of the lipid cycle reactions in the biosynthesis of the cell wall peptidoglycan: transfers peptidoglycan precursor phospho-MurNAc-pentapeptide from UDP-MurNAc-pentapeptide onto the lipid carrier undecaprenyl phosphate, yielding undecaprenyl-pyrophosphoryl-MurNAc-pentapeptide, known as lipid I. In Glaesserella parasuis serovar 5 (strain SH0165) (Haemophilus parasuis), this protein is Phospho-N-acetylmuramoyl-pentapeptide-transferase.